A 300-amino-acid chain; its full sequence is Probable protein phosphatase 2C 2 (300 aa).

One can recognise a PPM-type phosphatase domain in the interval 23–298 (IFAASEMQGW…DNMTTILVYL (276 aa)). Residues Asp-57, Gly-58, Asp-237, and Asp-289 each coordinate Mn(2+).

It belongs to the PP2C family. The cofactor is Mg(2+). It depends on Mn(2+) as a cofactor.

Its subcellular location is the membrane. It carries out the reaction O-phospho-L-seryl-[protein] + H2O = L-seryl-[protein] + phosphate. The catalysed reaction is O-phospho-L-threonyl-[protein] + H2O = L-threonyl-[protein] + phosphate. Functionally, enzyme with a broad specificity. The protein is Probable protein phosphatase 2C 2 of Paramecium tetraurelia.